Reading from the N-terminus, the 54-residue chain is Ovomucoid (54 aa).

A Kazal-like domain is found at 4–54 (VDCSDYPKPVCPLDYMPLCGSDSKTYSNKCNFCNAVVESSGTLTLRHFGKC). 3 disulfides stabilise this stretch: Cys6-Cys36, Cys14-Cys33, and Cys22-Cys54.

In terms of processing, this is the only ovomucoid third domain known to be not glycosylated.

The protein localises to the secreted. This Struthio camelus (Common ostrich) protein is Ovomucoid.